Here is a 354-residue protein sequence, read N- to C-terminus: Protein-arginine kinase (354 aa).

The region spanning 24-254 (IVLSSRIRLA…QQIIQQEKMA (231 aa)) is the Phosphagen kinase C-terminal domain. Residues 27–31 (SSRIR), His92, Arg125, 176–180 (RASVM), and 207–212 (RGIYGE) contribute to the ATP site. An RDXXRA motif of the pArg binding pocket involved in allosteric regulation motif is present at residues 337–342 (RDYRRA).

Belongs to the ATP:guanido phosphotransferase family.

The enzyme catalyses L-arginyl-[protein] + ATP = N(omega)-phospho-L-arginyl-[protein] + ADP + H(+). With respect to regulation, appears to be allosterically activated by the binding of pArg-containing polypeptides to the pArg-binding pocket localized in the C-terminal domain of McsB. Catalyzes the specific phosphorylation of arginine residues in a large number of proteins. Is part of the bacterial stress response system. Protein arginine phosphorylation has a physiologically important role and is involved in the regulation of many critical cellular processes, such as protein homeostasis, motility, competence, and stringent and stress responses, by regulating gene expression and protein activity. In Bacillus cereus (strain G9842), this protein is Protein-arginine kinase.